The sequence spans 393 residues: MTEGRKPHINVGTIGHVDHGKTTLTAALTTVLARKLSGANKVVKYDEIDKAPEEKARGITISTAHVEYETEGRHYAHVDCPGHADYIKNMITGAAQMDVAILVVSATDGAMPQTREHILLAKQVGVKDIVVWINKCDVVEDEEMLSLVDMEIRELLSQYGYDGDSIDAVRGSAVKALEEDADGPWSDKIMELVGALEKIELPMREKDKPFLMSVEDVFSIPGRGTVVTGRIERGVVRVGDKIDIVGLRELQSTVCTGVEMFHKALEAGEAGDNAGILLRGIKKEDVERGQVLSAPGQMKSYKKFKAEVYVLKKEEGGRHTPFFANYQPQFYVRTTDVTGSISLPAGVEMVMPGDNLSIEVALDKPVAIDKGLRFAVREGGRTVGSGIITEILE.

In terms of domain architecture, tr-type G spans 6–204 (KPHINVGTIG…ALEKIELPMR (199 aa)). The G1 stretch occupies residues 15–22 (GHVDHGKT). 15-22 (GHVDHGKT) lines the GTP pocket. Residue T22 coordinates Mg(2+). Residues 58-62 (GITIS) form a G2 region. A G3 region spans residues 79 to 82 (DCPG). GTP is bound by residues 79–83 (DCPGH) and 134–137 (NKCD). Positions 134–137 (NKCD) are G4. Residues 172 to 174 (SAV) are G5.

Belongs to the TRAFAC class translation factor GTPase superfamily. Classic translation factor GTPase family. EF-Tu/EF-1A subfamily. In terms of assembly, monomer.

It is found in the cytoplasm. The catalysed reaction is GTP + H2O = GDP + phosphate + H(+). Functionally, GTP hydrolase that promotes the GTP-dependent binding of aminoacyl-tRNA to the A-site of ribosomes during protein biosynthesis. The chain is Elongation factor Tu from Anaplasma phagocytophilum (strain HZ).